We begin with the raw amino-acid sequence, 485 residues long: NADH-quinone oxidoreductase subunit N (485 aa).

Helical transmembrane passes span 3–23 (LFMP…TDLF), 30–50 (HLAY…VLNW), 67–87 (YASF…MASV), 96–116 (FQGE…MMAS), 120–140 (LITM…LVGF), 154–174 (LLLG…IYGF), 202–222 (FILG…AVPF), 247–267 (AAGF…PLAL), 271–291 (WALI…VLAI), 299–319 (MLGY…AAVG), 332–352 (LFYL…IIAI), 375–395 (ASAL…AGFL), 411–431 (WLMI…FNVI), and 453–473 (LALG…ETLL).

It belongs to the complex I subunit 2 family. NDH-1 is composed of 14 different subunits. Subunits NuoA, H, J, K, L, M, N constitute the membrane sector of the complex.

Its subcellular location is the cell membrane. It catalyses the reaction a quinone + NADH + 5 H(+)(in) = a quinol + NAD(+) + 4 H(+)(out). Its function is as follows. NDH-1 shuttles electrons from NADH, via FMN and iron-sulfur (Fe-S) centers, to quinones in the respiratory chain. The immediate electron acceptor for the enzyme in this species is believed to be ubiquinone. Couples the redox reaction to proton translocation (for every two electrons transferred, four hydrogen ions are translocated across the cytoplasmic membrane), and thus conserves the redox energy in a proton gradient. This chain is NADH-quinone oxidoreductase subunit N, found in Dehalococcoides mccartyi (strain ATCC BAA-2100 / JCM 16839 / KCTC 5957 / BAV1).